Here is a 408-residue protein sequence, read N- to C-terminus: Pleckstrin homology domain-containing family O member 1 (408 aa).

Residues 1-21 are disordered; sequence MKKSGSGKRGPPDGNHQSAAP. Positions 20–131 constitute a PH domain; the sequence is APEKVGWVRK…WINALSSAIT (112 aa). Residues 132–192 form an interaction with capping proteins (CPs) region; sequence RAKNRILDEV…MLTLDLIQEE (61 aa). Positions 135–307 are interaction with ATM, CKIP, IFP35 and NMI; sequence NRILDEVTVE…PAQPGQLSRI (173 aa). A disordered region spans residues 217-264; that stretch reads LAGSRRRADSDRIQPSSQRASSLSRPWEKPDKGAPYTPQALKKFPSTE. S226 bears the Phosphoserine mark. Over residues 229 to 240 the composition is skewed to polar residues; the sequence is IQPSSQRASSLS. Residues S270 and S341 each carry the phosphoserine modification. A negative regulator of AP-1 activity region spans residues 307–408; the sequence is IQDLVARKLE…QHSQYRKSLM (102 aa). Disordered stretches follow at residues 325 to 348 and 389 to 408; these read VQGLGDGKRKAKDPPQSPPDSESE and TPDSHLRQTSQHSQYRKSLM. Residues 389–401 are compositionally biased toward polar residues; sequence TPDSHLRQTSQHS.

In terms of assembly, heterodimer or homodimer. Interacts with CK2 and actin capping subunits (capping protein CP-alpha and CP-beta). CKIP1 and CK2 together inhibit the activity of actin capping protein at the barbed ends of actin filaments. Interacts with ATM, IFP35, JUN, JUND, NMI and PI3K. Interacts with AKT1, AKT2 and AKT3 (each isozyme of PKB), PtdIns(3,5)P2, PtdIns(4,5)P2 and PtdIns(3,4,5)P2. C-terminal fragments could be released during apoptosis via caspase-3-dependent cleavage.

Its subcellular location is the cell membrane. The protein resides in the nucleus. It localises to the cytoplasm. Functionally, plays a role in the regulation of the actin cytoskeleton through its interactions with actin capping protein (CP). May function to target CK2 to the plasma membrane thereby serving as an adapter to facilitate the phosphorylation of CP by protein kinase 2 (CK2). Appears to target ATM to the plasma membrane. Appears to also inhibit tumor cell growth by inhibiting AKT-mediated cell-survival. Also implicated in PI3K-regulated muscle differentiation, the regulation of AP-1 activity (plasma membrane bound AP-1 regulator that translocates to the nucleus) and the promotion of apoptosis induced by tumor necrosis factor TNF. When bound to PKB, it inhibits it probably by decreasing PKB level of phosphorylation. The protein is Pleckstrin homology domain-containing family O member 1 (Plekho1) of Mus musculus (Mouse).